A 392-amino-acid chain; its full sequence is GTPase Obg (392 aa).

The 159-residue stretch at 1 to 159 (MKFVDEATIL…RDLQLELMLL (159 aa)) folds into the Obg domain. The tract at residues 127–148 (NTRFKSSVNRTPRQKTMGTPGD) is disordered. A compositionally biased stretch (polar residues) spans 129 to 143 (RFKSSVNRTPRQKTM). In terms of domain architecture, OBG-type G spans 160-333 (ADVGMLGMPN…LCWDVMTFII (174 aa)). GTP contacts are provided by residues 166 to 173 (GMPNAGKS), 191 to 195 (FTTLV), 213 to 216 (DIPG), 283 to 286 (NKID), and 314 to 316 (SAA). Positions 173 and 193 each coordinate Mg(2+). Residues 362-386 (EEAEAEAEDDEDWDDDWDEDDEEGV) show a composition bias toward acidic residues. Positions 362–392 (EEAEAEAEDDEDWDDDWDEDDEEGVEFIYKR) are disordered.

It belongs to the TRAFAC class OBG-HflX-like GTPase superfamily. OBG GTPase family. Monomer. Mg(2+) serves as cofactor.

It is found in the cytoplasm. Its function is as follows. An essential GTPase which binds GTP, GDP and possibly (p)ppGpp with moderate affinity, with high nucleotide exchange rates and a fairly low GTP hydrolysis rate. Plays a role in control of the cell cycle, stress response, ribosome biogenesis and in those bacteria that undergo differentiation, in morphogenesis control. In Klebsiella pneumoniae subsp. pneumoniae (strain ATCC 700721 / MGH 78578), this protein is GTPase Obg.